The sequence spans 98 residues: Hainantoxin-XVII.3 (98 aa).

The signal sequence occupies residues 1 to 40; sequence MTTVGVSLFRRSPEKITMKIATFLGLSFLLIASYFLICEA. The propeptide occupies 41 to 64; sequence QHPGFQELLILEENMRDPENSKER. Disulfide bonds link cysteine 66-cysteine 81, cysteine 73-cysteine 85, and cysteine 80-cysteine 95.

It belongs to the hainantoxin family. 17 subfamily. As to expression, expressed by the venom gland.

The protein resides in the secreted. In terms of biological role, inhibits with low potency Kv1.2/KCNA2 and Kv1.3/KCNA3 voltage-gated potassium channels. This is Hainantoxin-XVII.3 from Cyriopagopus hainanus (Chinese bird spider).